We begin with the raw amino-acid sequence, 96 residues long: Small ribosomal subunit protein bS21 (96 aa).

The tract at residues 52–96 (RRARKQARKTAIREGLIAAPKPKARPVSPRRPAAPAPASSPVGAA) is disordered. A compositionally biased stretch (low complexity) spans 69–96 (AAPKPKARPVSPRRPAAPAPASSPVGAA).

The protein belongs to the bacterial ribosomal protein bS21 family.

In Methylobacterium nodulans (strain LMG 21967 / CNCM I-2342 / ORS 2060), this protein is Small ribosomal subunit protein bS21.